We begin with the raw amino-acid sequence, 242 residues long: 3-dehydroquinate dehydratase (242 aa).

Residues 39–41 (EIR) and Arg73 contribute to the 3-dehydroquinate site. The Proton donor/acceptor role is filled by His135. Lys162 acts as the Schiff-base intermediate with substrate in catalysis. 3-dehydroquinate contacts are provided by Arg203 and Gln228.

The protein belongs to the type-I 3-dehydroquinase family. As to quaternary structure, homodimer.

The catalysed reaction is 3-dehydroquinate = 3-dehydroshikimate + H2O. The protein operates within metabolic intermediate biosynthesis; chorismate biosynthesis; chorismate from D-erythrose 4-phosphate and phosphoenolpyruvate: step 3/7. In terms of biological role, involved in the third step of the chorismate pathway, which leads to the biosynthesis of aromatic amino acids. Catalyzes the cis-dehydration of 3-dehydroquinate (DHQ) and introduces the first double bond of the aromatic ring to yield 3-dehydroshikimate. In Methanosarcina barkeri (strain Fusaro / DSM 804), this protein is 3-dehydroquinate dehydratase.